We begin with the raw amino-acid sequence, 426 residues long: Probable serine/threonine-protein kinase PBL2 (426 aa).

The disordered stretch occupies residues 1-54 (MGNCLDSSAKVDNSNHSPHANSASSGSKVSSKTSRSTGPSGLSTTSYSTDSSFG). Gly2 is lipidated: N-myristoyl glycine. Cys4 is lipidated: S-palmitoyl cysteine. A compositionally biased stretch (low complexity) spans 14–38 (SNHSPHANSASSGSKVSSKTSRSTG). Polar residues predominate over residues 39–52 (PSGLSTTSYSTDSS). Residue Thr75 is modified to Phosphothreonine. Positions 86-369 (FRQDNLLGEG…SEVLVTLEQL (284 aa)) constitute a Protein kinase domain. ATP contacts are provided by residues 92 to 100 (LGEGGFGCV) and Lys124. Residue Tyr169 is modified to Phosphotyrosine. Catalysis depends on Asp219, which acts as the Proton acceptor. At Ser253 the chain carries O-UMP-serine. Ser253 is modified (phosphoserine). Thr254 and Thr259 each carry phosphothreonine. Thr254 is subject to O-UMP-threonine. Tyr267 bears the Phosphotyrosine mark. The interval 374–426 (KPGTKHTQMESPRFHHSSVMQKSPVRYSHDRPLLHMTPGASPLPSYTQSPRVR) is disordered. The span at 417–426 (PSYTQSPRVR) shows a compositional bias: polar residues.

It belongs to the protein kinase superfamily. Ser/Thr protein kinase family. In terms of assembly, interacts with FLS2. Interacts with the Xanthomonas campestris effector XopAC/AvrAC; the recognition of X.campestris effector XopAC/AvrAC requires the presence of RKS1 and RPP13L4/ZAR1. Component of a stable high-order oligomeric complex made of RKS1 and RPP13L4/ZAR1 which recruits X.campestris effector XopAC/AvrAC-mediated uridylylated PBL2 in the presence of ATP to form a wheel-like pentameric resistosome; this complex triggers immunity toward X.campestris in vascular tissues. Binds to RKS1 when uridylylated. In terms of processing, uridylylated at Ser-253 and Thr-254 by Xanthomonas campestris effector AvrAC/XopAC; this uridylylation is necessary for specific recruitment to RKS1 and to trigger immunity. Strongly expressed in leaves, moderately in roots, and barely in flowers, mostly in pedicels.

It is found in the cell membrane. The protein localises to the nucleus. It catalyses the reaction L-seryl-[protein] + ATP = O-phospho-L-seryl-[protein] + ADP + H(+). The catalysed reaction is L-threonyl-[protein] + ATP = O-phospho-L-threonyl-[protein] + ADP + H(+). Its function is as follows. Involved in disease resistance signaling. Contributes to pathogen-associated molecular pattern (PAMP)-triggered immunity (PTI) signaling and defense responses downstream of FLS2. Acts as a BIK1 decoy and enables Xanthomonas campestris AvrAC/XopAC detection; X.campestris effector AvrAC/XopAC-mediated uridylylation promotes the formation of a complex with RKS1 and RPP13L4/ZAR1 which, in turn, activates effector-triggered immunity (ETI) against X.campestris. Promotes, when uridylylated by AvrAC/XopAC, the release of ADP from the inactive RKS1-ZAR1 complex, thus activating the resistosome. The protein is Probable serine/threonine-protein kinase PBL2 of Arabidopsis thaliana (Mouse-ear cress).